The sequence spans 815 residues: Probable disease resistance protein At5g66910 (815 aa).

The RPW8 domain maps to 1 to 150 (MVVVDWLGLG…NINKKLDRLS (150 aa)). NB-ARC domains follow at residues 156–283 (PLVS…DVWQ) and 341–440 (SPDE…DIWM). An ATP-binding site is contributed by 196–203 (GPPGCGKT). 4 LRR repeats span residues 656–678 (NLQEIDIDYCYDLDELPYWIPEV), 680–702 (SLKTLSITNCNKLSQLPEAIGNL), 704–726 (RLEVLRMCSCMNLSELPEATERL), and 728–750 (NLRSLDISHCLGLRKLPQEIGKL).

Belongs to the disease resistance NB-LRR family.

Functionally, probable disease resistance protein. This is Probable disease resistance protein At5g66910 from Arabidopsis thaliana (Mouse-ear cress).